A 299-amino-acid polypeptide reads, in one-letter code: Oxygen-dependent coproporphyrinogen-III oxidase (299 aa).

S92 contacts substrate. The a divalent metal cation site is built by H96 and H106. The active-site Proton donor is the H106. A substrate-binding site is contributed by 108–110; it reads NVR. H145 and H175 together coordinate a divalent metal cation. Residues 240-275 are important for dimerization; the sequence is YVEFNLVWDRGTLFGLQTGGRTESILMSMPPLVRWE. 258 to 260 is a binding site for substrate; sequence GGR.

Belongs to the aerobic coproporphyrinogen-III oxidase family. As to quaternary structure, homodimer. A divalent metal cation serves as cofactor.

The protein resides in the cytoplasm. The catalysed reaction is coproporphyrinogen III + O2 + 2 H(+) = protoporphyrinogen IX + 2 CO2 + 2 H2O. It participates in porphyrin-containing compound metabolism; protoporphyrin-IX biosynthesis; protoporphyrinogen-IX from coproporphyrinogen-III (O2 route): step 1/1. Involved in the heme biosynthesis. Catalyzes the aerobic oxidative decarboxylation of propionate groups of rings A and B of coproporphyrinogen-III to yield the vinyl groups in protoporphyrinogen-IX. In Shigella boydii serotype 18 (strain CDC 3083-94 / BS512), this protein is Oxygen-dependent coproporphyrinogen-III oxidase.